The sequence spans 93 residues: Serine rich endogenous peptide 6 (93 aa).

The first 27 residues, 1-27 (MGTKCYSKLRYVVVLVLLLFVFPCSLS), serve as a signal peptide directing secretion. Short sequence motifs (SCOOP motif) lie at residues 48–62 (GIIA…APNI) and 73–87 (ISEA…GGGR). The tract at residues 52–93 (GSSPSGQAPNINNNYHGRRLMISEARPSKSKKGGGREPESPG) is disordered. The span at 53–66 (SSPSGQAPNINNNY) shows a compositional bias: polar residues. 2 consecutive short sequence motifs (sxS motif essential for MIK2 binding) follow at residues 54-56 (SPS) and 79-81 (SKS).

Belongs to the serine rich endogenous peptide (SCOOP) phytocytokine family. Interacts with MIK2 (via extracellular leucine-rich repeat domain); this interaction triggers the formation of complex between MIK2 and the BAK1/SERK3 and SERK4 coreceptors, and subsequent BAK1 activation by phosphorylation. As to expression, mostly expressed in seedlings shoots, and, to a lower extent, in roots.

The protein resides in the cell membrane. Its subcellular location is the secreted. The protein localises to the extracellular space. It is found in the apoplast. Functionally, brassicaceae-specific phytocytokine (plant endogenous peptide released into the apoplast) perceived by MIK2 in a BAK1/SERK3 and SERK4 coreceptors-dependent manner, that modulates various physiological and antimicrobial processes including growth prevention and reactive oxygen species (ROS) response regulation. Inhibits root growth. The polypeptide is Serine rich endogenous peptide 6 (Arabidopsis thaliana (Mouse-ear cress)).